Consider the following 459-residue polypeptide: Exodeoxyribonuclease 7 large subunit (459 aa).

This sequence belongs to the XseA family. In terms of assembly, heterooligomer composed of large and small subunits.

The protein resides in the cytoplasm. It catalyses the reaction Exonucleolytic cleavage in either 5'- to 3'- or 3'- to 5'-direction to yield nucleoside 5'-phosphates.. In terms of biological role, bidirectionally degrades single-stranded DNA into large acid-insoluble oligonucleotides, which are then degraded further into small acid-soluble oligonucleotides. The protein is Exodeoxyribonuclease 7 large subunit of Pseudomonas savastanoi pv. phaseolicola (strain 1448A / Race 6) (Pseudomonas syringae pv. phaseolicola (strain 1448A / Race 6)).